The following is a 212-amino-acid chain: Ropporin-1B (212 aa).

In terms of domain architecture, RIIa spans 12-49 (PELPKMLKEFAKAAIRAQPQDLIQWGADYFEALSRGET). The residue at position 56 (Ser56) is a Phosphoserine. Residues 209 to 212 (VWLE) are interaction with RHPN1.

It belongs to the ropporin family. Homodimer. Interacts with RHPN1. May interact with SPA17. Interacts with AKAP3. Interacts with FSCB; the interaction increases upon spermatozoa capacitation conditions. In terms of processing, sumoylated, sumoylation decreases upon spermatozoa capacitation conditions.

Its subcellular location is the cell projection. The protein resides in the cilium. It localises to the flagellum. Functionally, important for male fertility. With ROPN1L, involved in fibrous sheath integrity and sperm motility, plays a role in PKA-dependent signaling processes required for spermatozoa capacitation. The polypeptide is Ropporin-1B (ROPN1B) (Homo sapiens (Human)).